A 312-amino-acid polypeptide reads, in one-letter code: Short-chain dehydrogenase/reductase pkfC (312 aa).

NADP(+) is bound by residues K56, N108, and K140. The Proton donor role is filled by S164. Residues Y193 and K197 each contribute to the NADP(+) site. Y193 serves as the catalytic Proton acceptor. The active-site Lowers pKa of active site Tyr is the K197.

The protein belongs to the short-chain dehydrogenases/reductases (SDR) family.

It participates in secondary metabolite biosynthesis. In terms of biological role, short-chain dehydrogenase/reductase; part of the gene cluster that mediates the biosynthesis of aspernidine A, a prenylated isoindolinone. The starting point of the biosynthesis of aspernidin A is the production of orsellinaldehyde by the non-reducing polyketide synthase pkfA. Hydroxylation, methylation of one of the phenol groups, and prenylation, presumably catalyzed by the prenyltransferase pkfE, would be needed to yield aspernidine D. Subsequently, the cytochrome P450 monooxygenase pkfB is responsible for hydroxylation of aspernidine D to yield aspernidine E. The dehydrogenase pkfF may be responsible for further oxidation of aspernidine E to form a dialdehyde intermediate which is further transformed in a series of steps, some of which are enzyme-mediated, to generate aspernidine A. The possibility that additional enzymes outside of the cluster are involved in aspernidine A biosynthesis cannot be excluded. The chain is Short-chain dehydrogenase/reductase pkfC from Emericella nidulans (strain FGSC A4 / ATCC 38163 / CBS 112.46 / NRRL 194 / M139) (Aspergillus nidulans).